We begin with the raw amino-acid sequence, 141 residues long: MAKKVTGVVKLQLPAGKATPAPPVGPALGGYGINIMAFVKEYNEKTASQAGSVVPVEVTVYSDRSFTITLKTPPAADLLRKVAGIEKGSGTPNRKIAGTITKKQLRQVAEQKMADLNAFDIEAAEKIIAGTARSMGIKIVD.

It belongs to the universal ribosomal protein uL11 family. In terms of assembly, part of the ribosomal stalk of the 50S ribosomal subunit. Interacts with L10 and the large rRNA to form the base of the stalk. L10 forms an elongated spine to which L12 dimers bind in a sequential fashion forming a multimeric L10(L12)X complex. Post-translationally, one or more lysine residues are methylated.

In terms of biological role, forms part of the ribosomal stalk which helps the ribosome interact with GTP-bound translation factors. The chain is Large ribosomal subunit protein uL11 from Roseiflexus sp. (strain RS-1).